We begin with the raw amino-acid sequence, 380 residues long: Crotonobetainyl-CoA reductase (380 aa).

The protein belongs to the acyl-CoA dehydrogenase family. In terms of assembly, homotetramer. The cofactor is FAD.

It is found in the cytoplasm. It carries out the reaction 4-(trimethylamino)butanoyl-CoA + oxidized [electron-transfer flavoprotein] + H(+) = crotonobetainyl-CoA + reduced [electron-transfer flavoprotein]. The protein operates within amine and polyamine metabolism; carnitine metabolism. Its function is as follows. Catalyzes the reduction of crotonobetainyl-CoA to gamma-butyrobetainyl-CoA. The chain is Crotonobetainyl-CoA reductase from Proteus sp. (strain LE138).